The sequence spans 288 residues: MTALITQFWQQVETALKTANPQEKCRLVNDLYDNLLPQIQLIKLEDFPEIVPQDNIAAFPEKPLLVAPKDVPKRSFATEEGYAATLHAIAHIEFNAINLGLDAAWRFGRNAQEELGEGLAFVKDWLRVAREESTHFSLVNEHLKTLGYQYGDFEAHAGLWEMAQATAHDIWERMALVPRVLEARGLDATPVLQEKIAQRKDFAAVNILDIILRDEIGHVYIGNHWYHALSKKRGLDAMKCFTELLHKYRIVIFKGVINTDARIQAGFTQHELDWIYEVEQTLKSYIKK.

This is an uncharacterized protein from Haemophilus influenzae (strain ATCC 51907 / DSM 11121 / KW20 / Rd).